The sequence spans 309 residues: Probable manganese-dependent inorganic pyrophosphatase (309 aa).

Mn(2+) contacts are provided by His9, Asp13, Asp15, Asp75, His97, and Asp149.

This sequence belongs to the PPase class C family. Mn(2+) serves as cofactor.

The protein resides in the cytoplasm. The catalysed reaction is diphosphate + H2O = 2 phosphate + H(+). This is Probable manganese-dependent inorganic pyrophosphatase from Bacillus licheniformis (strain ATCC 14580 / DSM 13 / JCM 2505 / CCUG 7422 / NBRC 12200 / NCIMB 9375 / NCTC 10341 / NRRL NRS-1264 / Gibson 46).